The chain runs to 378 residues: GTP 3',8-cyclase 3 (378 aa).

The region spanning 40-259 is the Radical SAM core domain; that stretch reads RCGRTMGDLR…STLGKKYGPI (220 aa). A GTP-binding site is contributed by R49. Residues C56 and C60 each contribute to the [4Fe-4S] cluster site. Residue Y62 coordinates S-adenosyl-L-methionine. C63 is a [4Fe-4S] cluster binding site. Residue R99 coordinates GTP. G103 provides a ligand contact to S-adenosyl-L-methionine. T134 contacts GTP. S-adenosyl-L-methionine is bound at residue S158. A GTP-binding site is contributed by K195. M229 serves as a coordination point for S-adenosyl-L-methionine. C292 and C295 together coordinate [4Fe-4S] cluster. A GTP-binding site is contributed by 297 to 299; the sequence is RSR. C309 is a [4Fe-4S] cluster binding site.

Belongs to the radical SAM superfamily. MoaA family. As to quaternary structure, monomer and homodimer. The cofactor is [4Fe-4S] cluster.

The catalysed reaction is GTP + AH2 + S-adenosyl-L-methionine = (8S)-3',8-cyclo-7,8-dihydroguanosine 5'-triphosphate + 5'-deoxyadenosine + L-methionine + A + H(+). Its pathway is cofactor biosynthesis; molybdopterin biosynthesis. Functionally, catalyzes the cyclization of GTP to (8S)-3',8-cyclo-7,8-dihydroguanosine 5'-triphosphate. In Mycobacterium bovis (strain ATCC BAA-935 / AF2122/97), this protein is GTP 3',8-cyclase 3.